We begin with the raw amino-acid sequence, 276 residues long: Foldase protein PrsA (276 aa).

The N-terminal stretch at 1–18 is a signal peptide; it reads MRKWMIVAAVAAVFGLSA. The N-palmitoyl cysteine moiety is linked to residue Cys19. Cys19 is lipidated: S-diacylglycerol cysteine. The region spanning 133–223 is the PpiC domain; it reads KPKIRASHIL…YGYHIIKVTD (91 aa).

This sequence belongs to the PrsA family.

It localises to the cell membrane. The enzyme catalyses [protein]-peptidylproline (omega=180) = [protein]-peptidylproline (omega=0). Its function is as follows. Plays a major role in protein secretion by helping the post-translocational extracellular folding of several secreted proteins. The chain is Foldase protein PrsA from Geobacillus sp. (strain WCH70).